The chain runs to 206 residues: Small ribosomal subunit protein uS4 (206 aa).

The 61-residue stretch at 96 to 156 (CRLDNVVYRM…EKAKNQLRIV (61 aa)) folds into the S4 RNA-binding domain.

It belongs to the universal ribosomal protein uS4 family. As to quaternary structure, part of the 30S ribosomal subunit. Contacts protein S5. The interaction surface between S4 and S5 is involved in control of translational fidelity.

Functionally, one of the primary rRNA binding proteins, it binds directly to 16S rRNA where it nucleates assembly of the body of the 30S subunit. In terms of biological role, with S5 and S12 plays an important role in translational accuracy. This is Small ribosomal subunit protein uS4 from Pseudomonas fluorescens (strain SBW25).